A 226-amino-acid polypeptide reads, in one-letter code: Uracil-DNA glycosylase (226 aa).

Asp65 (proton acceptor) is an active-site residue.

The protein belongs to the uracil-DNA glycosylase (UDG) superfamily. UNG family.

It is found in the cytoplasm. The catalysed reaction is Hydrolyzes single-stranded DNA or mismatched double-stranded DNA and polynucleotides, releasing free uracil.. In terms of biological role, excises uracil residues from the DNA which can arise as a result of misincorporation of dUMP residues by DNA polymerase or due to deamination of cytosine. This Bacillus pumilus (strain SAFR-032) protein is Uracil-DNA glycosylase.